We begin with the raw amino-acid sequence, 71 residues long: Brevinin-1E (71 aa).

Positions 1-22 (MFTLKKSMLLLFFLGTINLSLC) are cleaved as a signal peptide. Positions 23 to 45 (EEERDADEEERRDNPDESEVEVE) are excised as a propeptide. Residues Cys65 and Cys71 are joined by a disulfide bond.

It belongs to the frog skin active peptide (FSAP) family. Brevinin subfamily. In terms of tissue distribution, expressed by the skin glands.

Its subcellular location is the secreted. Its function is as follows. Shows antibacterial activity against representative Gram-negative and Gram-positive bacterial species, and a very high hemolytic activity. The sequence is that of Brevinin-1E from Pelophylax lessonae (Pool frog).